A 574-amino-acid polypeptide reads, in one-letter code: Envelope glycoprotein (574 aa).

A signal peptide spans 1-22 (MTLKDIPFWRVLLIFQTARVYA). The Extracellular portion of the chain corresponds to 23-514 (GFGDPREAIT…TGLHGLLPYL (492 aa)). N-linked (GlcNAc...) asparagine; by host glycosylation is found at asparagine 117 and asparagine 233. The short motif at 243–246 (CWLC) is the CXXC element. 3 disulfide bridges follow: cysteine 243-cysteine 246, cysteine 243-cysteine 471, and cysteine 463-cysteine 470. N-linked (GlcNAc...) asparagine; by host glycans are attached at residues asparagine 260, asparagine 267, asparagine 288, asparagine 298, asparagine 312, asparagine 318, asparagine 327, and asparagine 345. The interval 386-406 (FIPLLVGLGITTAVSTGTAGL) is fusion peptide. 2 coiled-coil regions span residues 407–457 (GYSI…LLTA) and 467–503 (QEKC…DNPF). Positions 446 to 462 (LQNRRGLDLLTAEQGGI) are immunosuppression. A CX6CC motif is present at residues 463–471 (CLALQEKCC). An N-linked (GlcNAc...) asparagine; by host glycan is attached at asparagine 475. The helical transmembrane segment at 515-535 (LPLLGPLFCLLLLITFGPLIF) threads the bilayer. Topologically, residues 536-574 (NKIITFVKQQIDAIQAKPIQVHYHRLEQEDNGGVYLRVS) are cytoplasmic. The YXXL motif; contains endocytosis signal signature appears at 558–561 (YHRL).

In terms of assembly, the mature envelope protein (Env) consists of a trimer of SU-TM heterodimers attached by a labile interchain disulfide bond. Specific enzymatic cleavages in vivo yield mature proteins. Envelope glycoproteins are synthesized as an inactive precursor that is N-glycosylated and processed likely by host cell furin or by a furin-like protease in the Golgi to yield the mature SU and TM proteins. The cleavage site between SU and TM requires the minimal sequence [KR]-X-[KR]-R. The R-peptide is released from the C-terminus of the cytoplasmic tail of the TM protein upon particle formation as a result of proteolytic cleavage by the viral protease. Cleavage of this peptide is required for TM to become fusogenic. Post-translationally, the CXXC motif is highly conserved across a broad range of retroviral envelope proteins. It is thought to participate in the formation of a labile disulfide bond possibly with the CX6CC motif present in the transmembrane protein. Isomerization of the intersubunit disulfide bond to an SU intrachain disulfide bond is thought to occur upon receptor recognition in order to allow membrane fusion.

The protein resides in the virion membrane. Its subcellular location is the host cell membrane. Functionally, the surface protein (SU) attaches the virus to the host cell by binding to its receptor. This interaction triggers the refolding of the transmembrane protein (TM) and is thought to activate its fusogenic potential by unmasking its fusion peptide. Fusion occurs at the host cell plasma membrane. In terms of biological role, the transmembrane protein (TM) acts as a class I viral fusion protein. Under the current model, the protein has at least 3 conformational states: pre-fusion native state, pre-hairpin intermediate state, and post-fusion hairpin state. During viral and target cell membrane fusion, the coiled coil regions (heptad repeats) assume a trimer-of-hairpins structure, positioning the fusion peptide in close proximity to the C-terminal region of the ectodomain. The formation of this structure appears to drive apposition and subsequent fusion of viral and target cell membranes. Membranes fusion leads to delivery of the nucleocapsid into the cytoplasm. The sequence is that of Envelope glycoprotein (env) from Macaca mulatta (Rhesus macaque).